A 216-amino-acid chain; its full sequence is Transmembrane emp24 domain-containing protein eca (216 aa).

Residues 1–20 (MRDQILSLALLLCVLHSACG) form the signal peptide. The Lumenal segment spans residues 21 to 182 (LYFHISETER…FRHTSESTNS (162 aa)). The GOLD domain occupies 30 to 126 (RKCFIEEVPD…QLRVHLDIQV (97 aa)). The stretch at 134–164 (ANVAQKEKLTELQLRIRQLLDQVEQITKEQN) forms a coiled coil. Residues 183 to 203 (RVLWWSLAQTVVLVCMGFWQM) form a helical membrane-spanning segment. Over 204–216 (RHLKSFFEAKKLV) the chain is Cytoplasmic. Residues 213-216 (KKLV) carry the Prevents secretion from ER motif.

It belongs to the EMP24/GP25L family.

It is found in the endoplasmic reticulum membrane. Functionally, eca and bai are essential, though not redundant, for dorsoventral patterning of the embryo. Specifically required during early embryogenesis for the activity of maternal tkv, while the zygotic tkv is not affected. Involved in Golgi organization. This chain is Transmembrane emp24 domain-containing protein eca, found in Drosophila ananassae (Fruit fly).